A 59-amino-acid chain; its full sequence is MKNTIVQQQRFLQSIHKPTYLQRPGSFALVYPYYAVMAGLGLYSLYASGRVIFGKKDAF.

The Mitochondrial matrix portion of the chain corresponds to 1–24 (MKNTIVQQQRFLQSIHKPTYLQRP). A helical transmembrane segment spans residues 25 to 47 (GSFALVYPYYAVMAGLGLYSLYA). Topologically, residues 48–59 (SGRVIFGKKDAF) are mitochondrial intermembrane.

Belongs to the cytochrome c oxidase subunit 7 family. As to quaternary structure, component of the cytochrome c oxidase (complex IV, CIV), a multisubunit enzyme composed of a catalytic core of 3 subunits and several supernumerary subunits. The complex exists as a monomer or a dimer and forms supercomplexes (SCs) in the inner mitochondrial membrane with ubiquinol-cytochrome c oxidoreductase (cytochrome b-c1 complex, complex III, CIII).

It is found in the mitochondrion inner membrane. It functions in the pathway energy metabolism; oxidative phosphorylation. Component of the cytochrome c oxidase, the last enzyme in the mitochondrial electron transport chain which drives oxidative phosphorylation. The respiratory chain contains 3 multisubunit complexes succinate dehydrogenase (complex II, CII), ubiquinol-cytochrome c oxidoreductase (cytochrome b-c1 complex, complex III, CIII) and cytochrome c oxidase (complex IV, CIV), that cooperate to transfer electrons derived from NADH and succinate to molecular oxygen, creating an electrochemical gradient over the inner membrane that drives transmembrane transport and the ATP synthase. Cytochrome c oxidase is the component of the respiratory chain that catalyzes the reduction of oxygen to water. Electrons originating from reduced cytochrome c in the intermembrane space (IMS) are transferred via the dinuclear copper A center (CU(A)) of subunit 2 and heme A of subunit 1 to the active site in subunit 1, a binuclear center (BNC) formed by heme A3 and copper B (CU(B)). The BNC reduces molecular oxygen to 2 water molecules using 4 electrons from cytochrome c in the IMS and 4 protons from the mitochondrial matrix. The chain is Cytochrome c oxidase subunit 7 (cox7) from Schizosaccharomyces pombe (strain 972 / ATCC 24843) (Fission yeast).